The chain runs to 162 residues: MQYVTPDLCDAYPELVQVVEPMFSNFGGRDSFGGEIVTIKCFEDNSLVKDQVDTDGKGKVLVVDGGGSLRRALLGDMLAEKAARNGWEGLVVYGCIRDVDVIAQTDLGVQALATHPMKTDKRGIGDLNVPVTFGGVTFRPGEYLYADNNGIIVSPQPLKMPE.

Residues 75-78 (GDML) and R97 contribute to the substrate site. Residue D98 coordinates a divalent metal cation.

Belongs to the class II aldolase/RraA-like family. Homotrimer. Requires a divalent metal cation as cofactor.

The enzyme catalyses 4-hydroxy-4-methyl-2-oxoglutarate = 2 pyruvate. It catalyses the reaction oxaloacetate + H(+) = pyruvate + CO2. In terms of biological role, catalyzes the aldol cleavage of 4-hydroxy-4-methyl-2-oxoglutarate (HMG) into 2 molecules of pyruvate. Also contains a secondary oxaloacetate (OAA) decarboxylase activity due to the common pyruvate enolate transition state formed following C-C bond cleavage in the retro-aldol and decarboxylation reactions. In Azotobacter vinelandii (strain DJ / ATCC BAA-1303), this protein is Putative 4-hydroxy-4-methyl-2-oxoglutarate aldolase.